The primary structure comprises 358 residues: Feruloyl CoA ortho-hydroxylase F6H1-1 (358 aa).

The Fe2OG dioxygenase domain maps to 200-308; it reads TKESLLMGSK…RISVPIFVNP (109 aa). Residue Tyr216 participates in 2-oxoglutarate binding. Positions 231, 233, and 289 each coordinate Fe cation. Residues Arg299 and Ser301 each coordinate 2-oxoglutarate.

The protein belongs to the iron/ascorbate-dependent oxidoreductase family. L-ascorbate serves as cofactor. It depends on Fe(2+) as a cofactor.

It catalyses the reaction (E)-feruloyl-CoA + 2-oxoglutarate + O2 = (E)-6-hydroxyferuloyl-CoA + succinate + CO2. Its pathway is phenylpropanoid metabolism. 2-oxoglutarate (OG)- and Fe(II)-dependent dioxygenase (2OGD) involved in scopoletin biosynthesis. Converts feruloyl CoA into 6'-hydroxyferuloyl CoA. The polypeptide is Feruloyl CoA ortho-hydroxylase F6H1-1 (Ipomoea batatas (Sweet potato)).